Consider the following 392-residue polypeptide: Mitochondrial distribution and morphology protein 10 (392 aa).

This sequence belongs to the MDM10 family. In terms of assembly, component of the ER-mitochondria encounter structure (ERMES) or MDM complex, composed of MMM1, MDM10, MDM12 and MDM34. Associates with the mitochondrial outer membrane sorting assembly machinery SAM(core) complex.

It localises to the mitochondrion outer membrane. Its function is as follows. Component of the ERMES/MDM complex, which serves as a molecular tether to connect the endoplasmic reticulum and mitochondria. Components of this complex are involved in the control of mitochondrial shape and protein biogenesis and may function in phospholipid exchange. MDM10 is involved in the late assembly steps of the general translocase of the mitochondrial outer membrane (TOM complex). Functions in the TOM40-specific route of the assembly of outer membrane beta-barrel proteins, including the association of TOM40 with the receptor TOM22 and small TOM proteins. Can associate with the SAM(core) complex as well as the MDM12-MMM1 complex, both involved in late steps of the major beta-barrel assembly pathway, that is responsible for biogenesis of all outer membrane beta-barrel proteins. May act as a switch that shuttles between both complexes and channels precursor proteins into the TOM40-specific pathway. Plays a role in mitochondrial morphology and in the inheritance of mitochondria. The chain is Mitochondrial distribution and morphology protein 10 from Phaeosphaeria nodorum (strain SN15 / ATCC MYA-4574 / FGSC 10173) (Glume blotch fungus).